The primary structure comprises 492 residues: ERAD-associated E3 ubiquitin-protein ligase HRD1A (492 aa).

At 1-3 (MIR) the chain is on the cytoplasmic side. A helical transmembrane segment spans residues 4–24 (LRTYAGLSFMATLAVIYHAFS). Topologically, residues 25 to 40 (SRGQFYPATVYLSTSK) are lumenal. A helical membrane pass occupies residues 41-61 (ISLVLLLNMCLVLMLSLWHLV). The Cytoplasmic segment spans residues 62 to 98 (KFVFLGSLREAEVERLNEQAWRELMEILFAITIFRQD). The helical transmembrane segment at 99–119 (FSSGFLPLVVTLLLIKALHWL) threads the bilayer. At 120–135 (AQKRVEYIETTPSVSK) the chain is on the lumenal side. Residues 136–156 (LSHFRIVSFMGFLLLVDSLFM) traverse the membrane as a helical segment. Topologically, residues 157 to 170 (YSSIRHLIQSRQAS) are cytoplasmic. Residues 171–191 (VSLFFSFEYMILATTTVAIFV) form a helical membrane-spanning segment. The Lumenal portion of the chain corresponds to 192 to 221 (KYVFYVTDMLMDGQWEKKPVYTFYLELIRD). A helical membrane pass occupies residues 222 to 242 (LLHLSMYICFFFVIFMNYGVP). Residues 243–492 (LHLLRELYET…KGKSVADAAE (250 aa)) are Cytoplasmic-facing. The segment at 292-330 (CIICREEMTNAKKLICGHLFHVHCLRSWLERQQTCPTCR) adopts an RING-type; atypical zinc-finger fold. 2 disordered regions span residues 339 to 379 (ATSA…NSLS) and 470 to 492 (ETRK…DAAE). A compositionally biased stretch (low complexity) spans 351-378 (QGSQQGTSSSGNQGSEISSSAGVSNNSL). Positions 470–486 (ETRKPESAGEPENKGKS) are enriched in basic and acidic residues.

It belongs to the HRD1 family.

The protein localises to the endoplasmic reticulum membrane. The catalysed reaction is S-ubiquitinyl-[E2 ubiquitin-conjugating enzyme]-L-cysteine + [acceptor protein]-L-lysine = [E2 ubiquitin-conjugating enzyme]-L-cysteine + N(6)-ubiquitinyl-[acceptor protein]-L-lysine.. Its pathway is protein modification; protein ubiquitination. In terms of biological role, probable component of the HRD1 ubiquitin ligase complex that mediates the rapid degradation of misfolded endoplasmic reticulum (ER) proteins, a process called ER-associated degradation (ERAD). Targets the misfolded LRR receptor kinase BRI1. Functions redundantly with HRD3B. The polypeptide is ERAD-associated E3 ubiquitin-protein ligase HRD1A (Arabidopsis thaliana (Mouse-ear cress)).